A 646-amino-acid chain; its full sequence is Phosphomethylpyrimidine synthase (646 aa).

Residues Asn235, Met264, Tyr293, His329, 349–351 (SRG), 390–393 (DGLR), and Glu429 each bind substrate. His433 is a binding site for Zn(2+). Tyr456 contributes to the substrate binding site. Zn(2+) is bound at residue His497. The [4Fe-4S] cluster site is built by Cys577, Cys580, and Cys585. Residues 624-646 (KSEEFRATGSELYHPAVHAEADE) form a disordered region.

Belongs to the ThiC family. In terms of assembly, homodimer. [4Fe-4S] cluster serves as cofactor.

It carries out the reaction 5-amino-1-(5-phospho-beta-D-ribosyl)imidazole + S-adenosyl-L-methionine = 4-amino-2-methyl-5-(phosphooxymethyl)pyrimidine + CO + 5'-deoxyadenosine + formate + L-methionine + 3 H(+). Its pathway is cofactor biosynthesis; thiamine diphosphate biosynthesis. In terms of biological role, catalyzes the synthesis of the hydroxymethylpyrimidine phosphate (HMP-P) moiety of thiamine from aminoimidazole ribotide (AIR) in a radical S-adenosyl-L-methionine (SAM)-dependent reaction. This chain is Phosphomethylpyrimidine synthase, found in Vibrio parahaemolyticus serotype O3:K6 (strain RIMD 2210633).